A 167-amino-acid chain; its full sequence is MAASCPCGSNRTYALCCEIAHKHHANVITPEQLMRSRYSAHVLGLVDYVVNTYHPSCHAEEQREGIAESIENDWCKLEVVKAEAGSNENEGFVEFNAYFDEDGKRYCMTERSRFVKEDGLWYYIDGTFPEEEPEQDPRLNQSVSSLKVGRNDPCICGSGKKFKKCCG.

Belongs to the UPF0225 family.

The protein is UPF0225 protein VV1358 of Vibrio vulnificus (strain YJ016).